The chain runs to 390 residues: Leu/Ile/Val-binding protein homolog 6 (390 aa).

The signal sequence occupies residues 1–21; sequence MKKIALTALAVFSLAASAAYA.

This sequence belongs to the leucine-binding protein family.

In terms of biological role, component of an amino-acid transport system. The sequence is that of Leu/Ile/Val-binding protein homolog 6 from Brucella suis biovar 1 (strain 1330).